The sequence spans 736 residues: MNHSPQSARPVSIMRRFLDSEAAGGITLMAAAALALIVANSPFAQTYFDALHLYIGPLSLAHWINDALMAIFFLLVGLEIKREMLDGQLASWPNRMLPGIAAAGGVILPAIIFAVLNHDNPAKLRGWAVPSATDIAFALGVLSLLGSRAPSSLKVFLATLAILDDLAAVVIIAIFYTAEISMPYLGAAFITAAVLFVMNRMGVVKLLPYLISAVILWFFVFNSGVHATVAGVVAALMIPLKPAPGRPDDMTSPLHKLEHALAKPVAFIVVPIFGFANAGISFKGLEASVLGDTLTLGILLGLFLGKQFGVFGAAWLAIKTGLAEKPMGASWVQLYGVAILCGIGFTMSIFIGLLSFPSDLMQTETKIGVLSGSALSAICGYLLLRAARPDQSAANPLWKADESPEAKNFGRFLCVFHFASYIASTYCTERLQAASSLLRRSSLEFALPGLLKRLIPRRFRAVETEIPVVRLHGAIMTGGTSLRPTLSLASTAGILEKAFADKHAPAVAISINSPGGAPVQSRLIYRRIRDLAVEHQKKVFVFVEDVAASGGYMIALAGDEIIADPSSIVGSIGVVSASFGFPELLKKIGVERRVYTAGSNKVTLDPFQPEKAEDIERLKALQLEIHATFIDMVKERRAGKLGDNPDLFSGLFWTGTTAASLGLIDGLGDMRSFLRKTYGDKVKLKLIQPQRGLLGRKLPGIGMDSGSVEPAQIAAHLGDGLLCVAEEKAIWARYGL.

The tract at residues 1–387 (MNHSPQSARP…ICGYLLLRAA (387 aa)) is na(+)/H(+) antiporter NhaA. 12 consecutive transmembrane segments (helical) span residues 23-43 (AGGITLMAAAALALIVANSPF), 58-78 (LSLAHWINDALMAIFFLLVGL), 96-116 (MLPGIAAAGGVILPAIIFAVL), 126-146 (GWAVPSATDIAFALGVLSLLG), 155-175 (VFLATLAILDDLAAVVIIAIF), 178-198 (AEISMPYLGAAFITAAVLFVM), 201-221 (MGVVKLLPYLISAVILWFFVF), 224-244 (GVHATVAGVVAALMIPLKPAP), 265-285 (VAFIVVPIFGFANAGISFKGL), 298-318 (ILLGLFLGKQFGVFGAAWLAI), 334-354 (LYGVAILCGIGFTMSIFIGLL), and 367-387 (IGVLSGSALSAICGYLLLRAA). Residues 388–736 (RPDQSAANPL…EKAIWARYGL (349 aa)) are peptidase S49.

The protein in the N-terminal section; belongs to the NhaA Na(+)/H(+) (TC 2.A.33) antiporter family. In the C-terminal section; belongs to the peptidase S49 family.

The protein resides in the cell inner membrane. The enzyme catalyses Na(+)(in) + 2 H(+)(out) = Na(+)(out) + 2 H(+)(in). In terms of biological role, na(+)/H(+) antiporter that extrudes sodium in exchange for external protons. The polypeptide is Na(+)/H(+) antiporter NhaA (Brucella abortus (strain 2308)).